The sequence spans 203 residues: N-(5'-phosphoribosyl)anthranilate isomerase (203 aa).

Belongs to the TrpF family.

It catalyses the reaction N-(5-phospho-beta-D-ribosyl)anthranilate = 1-(2-carboxyphenylamino)-1-deoxy-D-ribulose 5-phosphate. It participates in amino-acid biosynthesis; L-tryptophan biosynthesis; L-tryptophan from chorismate: step 3/5. The sequence is that of N-(5'-phosphoribosyl)anthranilate isomerase from Listeria innocua serovar 6a (strain ATCC BAA-680 / CLIP 11262).